We begin with the raw amino-acid sequence, 504 residues long: Maturase K (504 aa).

Belongs to the intron maturase 2 family. MatK subfamily.

Its subcellular location is the plastid. It localises to the chloroplast. Functionally, usually encoded in the trnK tRNA gene intron. Probably assists in splicing its own and other chloroplast group II introns. This chain is Maturase K, found in Quercus suber (Cork oak).